We begin with the raw amino-acid sequence, 132 residues long: Small ribosomal subunit protein uS8 (132 aa).

It belongs to the universal ribosomal protein uS8 family. In terms of assembly, part of the 30S ribosomal subunit. Contacts proteins S5 and S12.

Its function is as follows. One of the primary rRNA binding proteins, it binds directly to 16S rRNA central domain where it helps coordinate assembly of the platform of the 30S subunit. The chain is Small ribosomal subunit protein uS8 from Cereibacter sphaeroides (strain ATCC 17025 / ATH 2.4.3) (Rhodobacter sphaeroides).